Consider the following 673-residue polypeptide: Fatty acyl-CoA synthetase B (673 aa).

Positions methionine 1–alanine 18 are cleaved as a signal peptide. Residue asparagine 267 is glycosylated (N-linked (GlcNAc...) asparagine).

It belongs to the ATP-dependent AMP-binding enzyme family.

Its subcellular location is the endoplasmic reticulum. It carries out the reaction a long-chain fatty acid + ATP + CoA = a long-chain fatty acyl-CoA + AMP + diphosphate. Long chain fatty acid acyl-CoA synthetases catalyze the formation of a thiester bond between a free fatty acid and coenzyme A during fatty acid metabolic process. The chain is Fatty acyl-CoA synthetase B (fcsB) from Dictyostelium discoideum (Social amoeba).